Here is a 1029-residue protein sequence, read N- to C-terminus: Probable E3 ubiquitin protein ligase C167.07c (1029 aa).

Residues 46 to 75 (AENNSVAVQSLSRGFLARRKFKQDFRERWI) form the IQ domain. Residues 692 to 1029 (FGKLLKGPIR…VRSGVGFGFS (338 aa)) form the HECT domain. Catalysis depends on Cys-997, which acts as the Glycyl thioester intermediate.

It localises to the cytoplasm. Its subcellular location is the nucleus. The catalysed reaction is S-ubiquitinyl-[E2 ubiquitin-conjugating enzyme]-L-cysteine + [acceptor protein]-L-lysine = [E2 ubiquitin-conjugating enzyme]-L-cysteine + N(6)-ubiquitinyl-[acceptor protein]-L-lysine.. Its function is as follows. Probable E3 ubiquitin-protein ligase which mediates ubiquitination and subsequent proteasomal degradation of target proteins. The chain is Probable E3 ubiquitin protein ligase C167.07c from Schizosaccharomyces pombe (strain 972 / ATCC 24843) (Fission yeast).